The sequence spans 424 residues: MTESVTNQPLSDVDPDVAQAIQDELGRQRSTLEMIASENFAPRAVLEAQGSVLTNKYAEGYPGRRYYGGCEYVDVVENLARDRACELFGADHANVQPHSGAQANTAVMAALMQPGDTLMGLSLAHGGHLTHGMKINVSGKLYNIAAYEVEPETYRIDMDRVREQALEARPNVIVAGWSAYSRQLDFEAFRSIADEVGAKLWVDMAHFAGLVAAGLHPNPVPHAHVTTSTVHKTLAGPRSGVILCEADLKKKIDSAVFPGQQGGPLMHAIAGKAVAFKIAASEGFAERQRRTIEGAQILAERLTAPDLAEHGVSVLTGGTDVHLVLVDLRDSELDGKQAEDLLHRAGITVNRNAVPWDPRPPMVTSGLRIGTPALATRGFGAEQFTEVADVIAQALMPGADVDALRSRVDALTEQFPLYPGLEEW.

(6S)-5,6,7,8-tetrahydrofolate is bound by residues L123 and 127–129 (GHL). Position 232 is an N6-(pyridoxal phosphate)lysine (K232). E245 contributes to the (6S)-5,6,7,8-tetrahydrofolate binding site.

This sequence belongs to the SHMT family. As to quaternary structure, homodimer. Requires pyridoxal 5'-phosphate as cofactor.

It localises to the cytoplasm. It catalyses the reaction (6R)-5,10-methylene-5,6,7,8-tetrahydrofolate + glycine + H2O = (6S)-5,6,7,8-tetrahydrofolate + L-serine. The protein operates within one-carbon metabolism; tetrahydrofolate interconversion. It participates in amino-acid biosynthesis; glycine biosynthesis; glycine from L-serine: step 1/1. Catalyzes the reversible interconversion of serine and glycine with tetrahydrofolate (THF) serving as the one-carbon carrier. This reaction serves as the major source of one-carbon groups required for the biosynthesis of purines, thymidylate, methionine, and other important biomolecules. Also exhibits THF-independent aldolase activity toward beta-hydroxyamino acids, producing glycine and aldehydes, via a retro-aldol mechanism. This Kocuria rhizophila (strain ATCC 9341 / DSM 348 / NBRC 103217 / DC2201) protein is Serine hydroxymethyltransferase.